Reading from the N-terminus, the 98-residue chain is Co-chaperonin GroES (98 aa).

Belongs to the GroES chaperonin family. As to quaternary structure, heptamer of 7 subunits arranged in a ring. Interacts with the chaperonin GroEL.

The protein localises to the cytoplasm. Functionally, together with the chaperonin GroEL, plays an essential role in assisting protein folding. The GroEL-GroES system forms a nano-cage that allows encapsulation of the non-native substrate proteins and provides a physical environment optimized to promote and accelerate protein folding. GroES binds to the apical surface of the GroEL ring, thereby capping the opening of the GroEL channel. The chain is Co-chaperonin GroES from Bartonella quintana (strain Toulouse) (Rochalimaea quintana).